The sequence spans 234 residues: Octanoyltransferase (234 aa).

A BPL/LPL catalytic domain is found at 43-231; that stretch reads IPTRNYFLFV…HFQELFQAEL (189 aa). Substrate is bound by residues 88–95, 160–162, and 173–175; these read RGGDITYH, AMG, and GFA. The Acyl-thioester intermediate role is filled by Cys191.

It belongs to the LipB family.

The protein resides in the cytoplasm. The catalysed reaction is octanoyl-[ACP] + L-lysyl-[protein] = N(6)-octanoyl-L-lysyl-[protein] + holo-[ACP] + H(+). It functions in the pathway protein modification; protein lipoylation via endogenous pathway; protein N(6)-(lipoyl)lysine from octanoyl-[acyl-carrier-protein]: step 1/2. Functionally, catalyzes the transfer of endogenously produced octanoic acid from octanoyl-acyl-carrier-protein onto the lipoyl domains of lipoate-dependent enzymes. Lipoyl-ACP can also act as a substrate although octanoyl-ACP is likely to be the physiological substrate. The polypeptide is Octanoyltransferase (Christiangramia forsetii (strain DSM 17595 / CGMCC 1.15422 / KT0803) (Gramella forsetii)).